The following is a 165-amino-acid chain: Lipoprotein signal peptidase (165 aa).

The next 3 membrane-spanning stretches (helical) occupy residues 9–29 (LLTISFFVLIDWVTKLAVLLY), 69–89 (KYFLLLIRIVIILGILAFLFL), and 100–120 (FSLILLCSGAIGNVGDIFFYN). Active-site residues include D124 and D142. A helical transmembrane segment spans residues 133-153 (WSFPTFNFADIFISLGTLIFV).

This sequence belongs to the peptidase A8 family.

Its subcellular location is the cell inner membrane. The catalysed reaction is Release of signal peptides from bacterial membrane prolipoproteins. Hydrolyzes -Xaa-Yaa-Zaa-|-(S,diacylglyceryl)Cys-, in which Xaa is hydrophobic (preferably Leu), and Yaa (Ala or Ser) and Zaa (Gly or Ala) have small, neutral side chains.. Its pathway is protein modification; lipoprotein biosynthesis (signal peptide cleavage). Functionally, this protein specifically catalyzes the removal of signal peptides from prolipoproteins. In Chlamydia felis (strain Fe/C-56) (Chlamydophila felis), this protein is Lipoprotein signal peptidase.